Consider the following 301-residue polypeptide: Glycine--tRNA ligase alpha subunit (301 aa).

This sequence belongs to the class-II aminoacyl-tRNA synthetase family. As to quaternary structure, tetramer of two alpha and two beta subunits.

The protein localises to the cytoplasm. It catalyses the reaction tRNA(Gly) + glycine + ATP = glycyl-tRNA(Gly) + AMP + diphosphate. This Bordetella avium (strain 197N) protein is Glycine--tRNA ligase alpha subunit.